Here is a 314-residue protein sequence, read N- to C-terminus: Ribose-phosphate pyrophosphokinase (314 aa).

Residues 37 to 39 (DGE) and 96 to 97 (RQ) each bind ATP. Histidine 131 and aspartate 170 together coordinate Mg(2+). Lysine 194 is a catalytic residue. D-ribose 5-phosphate is bound by residues arginine 196, aspartate 220, and 224-228 (DTGGT).

This sequence belongs to the ribose-phosphate pyrophosphokinase family. Class I subfamily. Homohexamer. Mg(2+) serves as cofactor.

Its subcellular location is the cytoplasm. It catalyses the reaction D-ribose 5-phosphate + ATP = 5-phospho-alpha-D-ribose 1-diphosphate + AMP + H(+). The protein operates within metabolic intermediate biosynthesis; 5-phospho-alpha-D-ribose 1-diphosphate biosynthesis; 5-phospho-alpha-D-ribose 1-diphosphate from D-ribose 5-phosphate (route I): step 1/1. Functionally, involved in the biosynthesis of the central metabolite phospho-alpha-D-ribosyl-1-pyrophosphate (PRPP) via the transfer of pyrophosphoryl group from ATP to 1-hydroxyl of ribose-5-phosphate (Rib-5-P). The sequence is that of Ribose-phosphate pyrophosphokinase from Vibrio vulnificus (strain CMCP6).